A 155-amino-acid chain; its full sequence is RNA pyrophosphohydrolase (155 aa).

A Nudix hydrolase domain is found at 5–147 (KYRPNVAAII…KRQVYRQVIA (143 aa)). The Nudix box signature appears at 42-63 (GGIDEGETPLEALHRELLEEIG).

This sequence belongs to the Nudix hydrolase family. RppH subfamily. The cofactor is a divalent metal cation.

Accelerates the degradation of transcripts by removing pyrophosphate from the 5'-end of triphosphorylated RNA, leading to a more labile monophosphorylated state that can stimulate subsequent ribonuclease cleavage. The polypeptide is RNA pyrophosphohydrolase (Helicobacter pylori (strain G27)).